The primary structure comprises 1354 residues: Phosphoribosylformylglycinamidine synthase (1354 aa).

ATP contacts are provided by residues 327–338 (GATTGTGGRLRD), 407–409 (SGF), and alanine 714. The Mg(2+) site is built by aspartate 715, glutamate 754, asparagine 758, and aspartate 918. Residue serine 920 coordinates ATP. The Glutamine amidotransferase type-1 domain occupies 1087-1337 (VAVLREEGVN…EVSPTQSESP (251 aa)). The active-site Nucleophile is cysteine 1180. Residues histidine 1310 and glutamate 1312 contribute to the active site.

It in the N-terminal section; belongs to the FGAMS family.

The enzyme catalyses N(2)-formyl-N(1)-(5-phospho-beta-D-ribosyl)glycinamide + L-glutamine + ATP + H2O = 2-formamido-N(1)-(5-O-phospho-beta-D-ribosyl)acetamidine + L-glutamate + ADP + phosphate + H(+). It functions in the pathway purine metabolism; IMP biosynthesis via de novo pathway; 5-amino-1-(5-phospho-D-ribosyl)imidazole from N(2)-formyl-N(1)-(5-phospho-D-ribosyl)glycinamide: step 1/2. In terms of biological role, phosphoribosylformylglycinamidine synthase involved in the purines biosynthetic pathway. Catalyzes the ATP-dependent conversion of formylglycinamide ribonucleotide (FGAR) and glutamine to yield formylglycinamidine ribonucleotide (FGAM) and glutamate. Because of its role in metabolisms, is involved in sleep regulation. The protein is Phosphoribosylformylglycinamidine synthase of Drosophila melanogaster (Fruit fly).